The following is a 143-amino-acid chain: Root meristem growth factor 10 (143 aa).

An N-terminal signal peptide occupies residues 1-27 (MDMLRSACFYFLLIVFVILSWSLLCDS). A propeptide spanning residues 28–130 (RHLGHMEKKL…SDQEHPGFNL (103 aa)) is cleaved from the precursor. Asn-60 carries N-linked (GlcNAc...) asparagine glycosylation. A compositionally biased stretch (polar residues) spans 74–83 (NHGDNGQING). The disordered stretch occupies residues 74-143 (NHGDNGQING…QPTTHPPHHN (70 aa)). Positions 92-99 (VKRASDKK) match the Nuclear localization signal motif. Position 132 is a sulfotyrosine (Tyr-132). A Hydroxyproline modification is found at Pro-140.

This sequence belongs to the RGF family. In terms of assembly, binds to LRR receptor-like serine/threonine-protein kinases RGI1, RGI2 and RGI3 to trigger their dimerization with SERK proteins and subsequent signaling. Post-translationally, the tyrosine sulfation is critical for the function of the peptide. As to expression, expressed in root tips.

It localises to the secreted. The protein resides in the nucleus. Functionally, maintains the postembryonic root stem cell niche by regulating the expression levels and patterns of the transcription factor PLETHORA (PLT), mainly at the post-transcriptional level. Promotes root elongation. This is Root meristem growth factor 10 from Arabidopsis thaliana (Mouse-ear cress).